The following is a 154-amino-acid chain: Endoribonuclease YbeY (154 aa).

Residues histidine 120, histidine 124, and histidine 130 each coordinate Zn(2+).

Belongs to the endoribonuclease YbeY family. It depends on Zn(2+) as a cofactor.

It localises to the cytoplasm. Single strand-specific metallo-endoribonuclease involved in late-stage 70S ribosome quality control and in maturation of the 3' terminus of the 16S rRNA. This Leptospira biflexa serovar Patoc (strain Patoc 1 / Ames) protein is Endoribonuclease YbeY.